A 494-amino-acid chain; its full sequence is Aldehyde dehydrogenase family 7 member A1 (494 aa).

Position 247–252 (247–252 (GSSKVG)) interacts with NAD(+). Glu-269 acts as the Proton acceptor in catalysis. Catalysis depends on Cys-303, which acts as the Nucleophile.

This sequence belongs to the aldehyde dehydrogenase family. As to quaternary structure, homotetramer.

It catalyses the reaction an aldehyde + NAD(+) + H2O = a carboxylate + NADH + 2 H(+). The chain is Aldehyde dehydrogenase family 7 member A1 (BTG-26) from Brassica napus (Rape).